Reading from the N-terminus, the 249-residue chain is Methylthioribulose-1-phosphate dehydratase (249 aa).

2 residues coordinate Zn(2+): His103 and His105.

Belongs to the aldolase class II family. MtnB subfamily. It depends on Zn(2+) as a cofactor.

The catalysed reaction is 5-(methylsulfanyl)-D-ribulose 1-phosphate = 5-methylsulfanyl-2,3-dioxopentyl phosphate + H2O. Its pathway is amino-acid biosynthesis; L-methionine biosynthesis via salvage pathway; L-methionine from S-methyl-5-thio-alpha-D-ribose 1-phosphate: step 2/6. In terms of biological role, catalyzes the dehydration of methylthioribulose-1-phosphate (MTRu-1-P) into 2,3-diketo-5-methylthiopentyl-1-phosphate (DK-MTP-1-P). The chain is Methylthioribulose-1-phosphate dehydratase from Leptospira interrogans serogroup Icterohaemorrhagiae serovar Lai (strain 56601).